The following is a 488-amino-acid chain: Glutamyl-tRNA(Gln) amidotransferase subunit A (488 aa).

Catalysis depends on charge relay system residues K78 and S153. S177 functions as the Acyl-ester intermediate in the catalytic mechanism.

Belongs to the amidase family. GatA subfamily. In terms of assembly, heterotrimer of A, B and C subunits.

It catalyses the reaction L-glutamyl-tRNA(Gln) + L-glutamine + ATP + H2O = L-glutaminyl-tRNA(Gln) + L-glutamate + ADP + phosphate + H(+). Allows the formation of correctly charged Gln-tRNA(Gln) through the transamidation of misacylated Glu-tRNA(Gln) in organisms which lack glutaminyl-tRNA synthetase. The reaction takes place in the presence of glutamine and ATP through an activated gamma-phospho-Glu-tRNA(Gln). The protein is Glutamyl-tRNA(Gln) amidotransferase subunit A of Solidesulfovibrio magneticus (strain ATCC 700980 / DSM 13731 / RS-1) (Desulfovibrio magneticus).